The following is a 335-amino-acid chain: Deoxyhypusine hydroxylase (335 aa).

HEAT-like PBS-type repeat units follow at residues 71-97 (LKHELAYCLGQTRNPESVPFLQQVAKD), 104-130 (CRHEAAEALGALGYEDSLEILKALRDN), 200-233 (LRYRAMFALRDLASPPDLPTATRAVEALAKGLKD), 238-264 (FRHEIAFVFGQLCHPASIPSLTEALSN), and 271-298 (VRHEAAEALGSLGDCEGVEETLRKFLND). Fe cation contacts are provided by histidine 73, glutamate 74, histidine 106, and glutamate 107. Fe cation is bound by residues histidine 240, glutamate 241, histidine 273, and glutamate 274.

Belongs to the deoxyhypusine hydroxylase family. Fe(2+) is required as a cofactor.

The protein resides in the cytoplasm. It is found in the nucleus. The enzyme catalyses [eIF5A protein]-deoxyhypusine + AH2 + O2 = [eIF5A protein]-hypusine + A + H2O. It participates in protein modification; eIF5A hypusination. Its function is as follows. Catalyzes the hydroxylation of the N(6)-(4-aminobutyl)-L-lysine intermediate to form hypusine, an essential post-translational modification only found in mature eIF-5A factor. The protein is Deoxyhypusine hydroxylase (lia1) of Neosartorya fischeri (strain ATCC 1020 / DSM 3700 / CBS 544.65 / FGSC A1164 / JCM 1740 / NRRL 181 / WB 181) (Aspergillus fischerianus).